A 3658-amino-acid polypeptide reads, in one-letter code: MSRRAPGSRLSSGGGGTKYPRSWNDWQPRTDSASADPDTLKYSSSRDRGVSSSYGLQPSNSAVVSRQRHDDTRGHADIQNDEKGGYSVNGGSGENTYGRKSLGQELRINNVTSPEFTSVQHGSRALATKDMRKSQERSMSYSDESRLSNLLRRITREDDRDRRLATVKQLKEFIQQPENKLVLVKQLDNILAAVHDVLNESSKLLQELRQEGACCLGLLCASLSYEAEKIFKWIFSKFSSSAKDEVKLLYLCATYRALETVGEKKAFSSVMQLVMTSLQSILENVDTPELLCKCVKCILLVARCYPHIFSTNFRDTVDILVGWHIDHTQKPSLTQQVSGWLQSLEPFWVADLAFSTTLLGQFLEDMEAYAEDLSHVASGESVDEDVPPPSVSLPKLAALLRVFSTVVRSIGERFSPIRGPPITEAYVTDVLYRVMRCVTAANQVFFSEAVLTAANECVGVLLGSLDPSMTIHCDMVITYGLDQLENCQTCGTDYIISVLNLLTLIVEQINTKLPSSFVEKLFIPSSKLLFLRYHKEKEVVAVAHAVYQAVLSLKNIPVLETAYKLILGEMTCALNNLLHSLQLPDACSEIKHEAFQNHVFNIDNANFVVIFDLSALTTIGNAKNSLIGMWALSPTVFALLSKNLMIVHSDLAVHFPAIQYAVLYTLYSHCTRHDHFISSSLSSSSPSLFDGAVISTVTTATKKHFSIILNLLGILLKKDNLNQDTRKLLMTWALEVAVLMKKSETYAPLFSLPSFHKFSKGLLANTLVEDVNICLQACSSLHALSSSLPDDLLQRCVDVCRVQLVHSGTRIRQAFGKLLKSIPLDVVLSNNNHTEIQEISLALRSHMSKAPSNTFHPQDFSDVISFILYGNSHRTGKDNWLERLFYSCQRLDKRDQSTIPRNLLKTDAVLWQWAIWEAAQFTVLSKLRTPLGRAQDTFQTIEGIIRSLAAHTLNPDQDVSQWTTADNDEGHGSNQLRLVLLLQYLENLEKLMYNAYEGCANALTSPPKVIRTFFYTNRQTCQDWLTRIRLSIMRVGLLAGQPAVTVRHGFDLLTEMKTNSLTQGSELEVTIMMVVEALCELHCPEAIQGIAVWSSSAVGKNLLWINSVAQQAEGRFEKASVEYQEHLCAMTGVDCCISSFDKSVLTLANAGRNSASPKHSLNGESRKTVLSKSIDSSPEVISYLGNKACECYISIADWAAVQEWQNAVHDLKKNSSSTSLNLKADFNYIKSLSSFESGEFVECTEQLELLPGENINLLAGGSKEKIDMKKLLPNMLSPDPRELQKSIEVQLLRSSVFLATALNHMEQDQKWQSLTENVVKYLKQTSRIAIGPLRLSTLTVSQSLPVLSTLQLYCSSALENTVSNRLSTEDCLIPLFSDALRSCKQHDVRPWMQALRYTMYQNQLLEKIKEQTVPIRSHLMELGLTAAKFARKRGNVSLATRLLAQCSEVQLGKTTTAQDLVQHFKKLSTQGQVDEKWGPELDIEKTKLLYTAGQSTHAMEMLSSCAISFCKSAKAEYAVAKSILTLAKWVQAEWKEISGQLRQVYRAQQQQNLSGLSTLSRNILALIELPSANTVGEEHPRIESESTVHIGVGEPDFILGQLYHLSSVQAPEVAKSWAALASWAYRWGRKVVDNASQGEGVRLLPREKSEVQNLLPDTITEEEKERIYGILGQAVCRPAGIQDEDITLQITESEDNEDDDMVDVIWRQLISSCPWLSELDENATEGVIKVWRKVVDRIFSLYKLSCSAYFTFLKLNAGQVLLDEDDPRLHLSHRAEQSTDDVIVMATLRLLRLLVKHAGELRQYLEHGLETTPTAPWRGIIPQLFSRLNHPEVYVRQSICNLLCRVAQDSPHLILYPAIVGTISLSSESQASGNKYSSAIPTLLGNIQGEELLVSECEGGSPPASQDSNKDEPKSGLNEDQAMMQDCYSKIVDKLSSANPTMVLQVQMLVAELRRVTVLWDELWLGVLLQQHMYVLRRIQQLEDEVKRVQNNNTLRKEEKIAIMREKHTALMKPIVFALEHVRSITAAPAETPHEKWFQDNYGDAIDNALEKLKTPSNPAKPGSSWIPFKEIMLSLQQRAQKRASYILRLDEISPWLAAMTNTEIALPGEVSARDTVTIHSVGGTITILPTKTKPKKLLFLGSDGKSYPYLFKGLEDLHLDERIMQFLSIVNTMFATINRQETPRFHARHYSVTPLGTRSGLIQWVDGATPLFGLYKRWQQREAALQAQKAQDSYQTPQNPSIVPRPSELYYSKIGPALKTVGLSLDVSRRDWPLHVMKAVLEELMEATPPNLLAKELWSSCTTPDEWWRVTQSYARSTAVMSMVGYIIGLGDRHLDNVLIDMTTGEVVHIDYNVCFEKGKSLRVPEKVPFRMTQNIETALGVTGVEGVFRLSCEQVLHIMRRGRETLLTLLEAFVYDPLVDWTAGGEAGFAGAVYGGGGQQAESKQSKREMEREITRSLFSSRVAEIKVNWFKNRDEMLVVLPKLDSSLDEYLSLQEQLTDVEKLQGKLLEEIEFLEGAEGVDHPSHTLQHRYSEHTQLQTQQRAVQEAIQVKLNEFEQWITHYQAAFNNLEATQLASLLQEISTQMDLGPPSYVPATAFLQNAGQAHLISQCEQLEGEVGALLQQRRSVLRGCLEQLHHYATVALQYPKAIFQKHRIEQWKAWMEELICNTTVERCQELYRKYEMQYAPQPPPTVCQFITATEMTLQRYAADINSRLIRQVERLKQEAVTVPVCEDQLKEIERCIKVFLHENGEEGSLSLASVIISALCTLTRRNLMMEGAASSAGEQLVDLTSRDGAWFLEELCSMSGNVTCLVQLLKQCHLVPQDLDIPNPVEASEAVHLANGVYTSLQELNSNFRQIIFPEALRCLMKGECTLESMLHELDSLIEQTTDGVPLQTLVESLQAYLRNTAMGLEEETHAHYIDVARMLHAQYGELIQPRNGSVDETPKMSAGQMLLVAFDGMFAQVETAFGLLVEKLNKMEIPVAWRKIDIIREARSTQVNFFDDDNHRQVLEEIFFLKRLQTIKEFFRLCGTFSKTLSGSSSLEDQNTVNGPVQIVNVKTLFRNSCFSEDQMAKPIKAFTADFVRQLLIGLPNQALGLTLCSFISALGVDIIAQVEAKDFGAESKVSVDDLCKKAVEHNIQVGKFSQLVMNRATVLASSYDTAWKKHDLVRRLETSISSCKTSLQRVQLHIAMFQWQHEDLLISRPQAMSVTPPRSAILTSMKKKLHALSQIETSIGTVQEKLAALEASIEQRLKWAGGANPALAPVLQDFEATIAERRNLVLKESQRANQVTFLCSNIIHFESLRTRTAEALSLDAALFELIKRCQQMCSFASQFNSSVSELELRLLQRVDTTLEHPIGSSEWLLSAHKQLTQDMSTQRAVQTEKEQQIETVCETIQSLVDSVKTVLTGHNRQLGDVKHLLKAMAKDEEAALADAEDIPYESSVRQFLAEYKSWQDNIQTVLFTLVQAMGQVRSQEHVEMLQEITPTLKELKTQSQSIYNNLVSFASPLVTDAANECSSPTSSATYQPSFAAAVRSNTGQKTQPDVMSQNAKKLIQKNLATSADTPPSTIPGTGKSIACSPKKAVRDPKTGKAVQERNSYAVSVWKRVKAKLEGRDVDPNRRMSVAEQVDYVIKEATNLDNLAQLYEGWTAWV.

Disordered stretches follow at residues 1–99 (MSRR…TYGR) and 116–142 (FTSV…MSYS). Positions 24 to 33 (NDWQPRTDSA) are enriched in polar residues. Basic and acidic residues-rich tracts occupy residues 67-84 (QRHD…DEKG) and 127-136 (ATKDMRKSQE). Lys-171 carries the post-translational modification N6-acetyllysine. The FAT domain occupies 1281–1864 (RELQKSIEVQ…LYPAIVGTIS (584 aa)). The stretch at 1815-1850 (APWRGIIPQLFSRLNHPEVYVRQSICNLLCRVAQDS) is one HEAT repeat. Positions 1896–1917 (ECEGGSPPASQDSNKDEPKSGL) are disordered. Residues 2122–2461 (VGGTITILPT…MEREITRSLF (340 aa)) form the PI3K/PI4K catalytic domain. Residues 2128-2134 (ILPTKTK) form a G-loop region. Positions 2330-2338 (GLGDRHLDN) are catalytic loop. Positions 2350–2374 (HIDYNVCFEKGKSLRVPEKVPFRMT) are activation loop. Thr-3547 is subject to Phosphothreonine. A phosphoserine mark is found at Ser-3553 and Ser-3567. Over residues 3565–3576 (ATSADTPPSTIP) the composition is skewed to polar residues. The interval 3565–3588 (ATSADTPPSTIPGTGKSIACSPKK) is disordered. Thr-3570 and Thr-3574 each carry phosphothreonine. The 33-residue stretch at 3626 to 3658 (RRMSVAEQVDYVIKEATNLDNLAQLYEGWTAWV) folds into the FATC domain.

The protein belongs to the PI3/PI4-kinase family. In terms of assembly, component of the SMG1C complex composed of SMG1, SMG8 and SMG9; the recruitment of SMG8 to SMG1 N-terminus induces a large conformational change in the SMG1 C-terminal head domain containing the catalytic domain. Component of the transient SURF (SMG1-UPF1-eRF1-eRF3) complex. Part of a complex composed of SMG1, DHX34 and UPF1; within the complex DHX34 acts as a scaffolding protein to facilitate SMG1 phosphorylation of UPF1. Interacts with PRKCI. Interacts with TELO2 and TTI1. Interacts with RUVBL1 and RUVBL2. Interacts with DHX34 (via C-terminus); the interaction is RNA-independent. Mn(2+) serves as cofactor. Autophosphorylated.

It is found in the nucleus. It localises to the cytoplasm. The catalysed reaction is L-seryl-[protein] + ATP = O-phospho-L-seryl-[protein] + ADP + H(+). It carries out the reaction L-threonyl-[protein] + ATP = O-phospho-L-threonyl-[protein] + ADP + H(+). With respect to regulation, inhibited by caffeine, LY294002 and wortmannin. Its function is as follows. Serine/threonine protein kinase involved in both mRNA surveillance and genotoxic stress response pathways. Recognizes the substrate consensus sequence [ST]-Q. Plays a central role in nonsense-mediated decay (NMD) of mRNAs containing premature stop codons by phosphorylating UPF1/RENT1. Recruited by release factors to stalled ribosomes together with SMG8 and SMG9 (forming the SMG1C protein kinase complex), and UPF1 to form the transient SURF (SMG1-UPF1-eRF1-eRF3) complex. In EJC-dependent NMD, the SURF complex associates with the exon junction complex (EJC) through UPF2 and allows the formation of an UPF1-UPF2-UPF3 surveillance complex which is believed to activate NMD. Also acts as a genotoxic stress-activated protein kinase that displays some functional overlap with ATM. Can phosphorylate p53/TP53 and is required for optimal p53/TP53 activation after cellular exposure to genotoxic stress. Its depletion leads to spontaneous DNA damage and increased sensitivity to ionizing radiation (IR). May activate PRKCI but not PRKCZ. The protein is Serine/threonine-protein kinase SMG1 of Mus musculus (Mouse).